A 239-amino-acid chain; its full sequence is Ubiquinone biosynthesis O-methyltransferase (239 aa).

S-adenosyl-L-methionine contacts are provided by R44, G63, D84, and M128.

It belongs to the methyltransferase superfamily. UbiG/COQ3 family.

The enzyme catalyses a 3-demethylubiquinol + S-adenosyl-L-methionine = a ubiquinol + S-adenosyl-L-homocysteine + H(+). It catalyses the reaction a 3-(all-trans-polyprenyl)benzene-1,2-diol + S-adenosyl-L-methionine = a 2-methoxy-6-(all-trans-polyprenyl)phenol + S-adenosyl-L-homocysteine + H(+). Its pathway is cofactor biosynthesis; ubiquinone biosynthesis. Functionally, O-methyltransferase that catalyzes the 2 O-methylation steps in the ubiquinone biosynthetic pathway. This is Ubiquinone biosynthesis O-methyltransferase from Xanthomonas oryzae pv. oryzae (strain MAFF 311018).